An 82-amino-acid polypeptide reads, in one-letter code: Sec-independent protein translocase protein TatA (82 aa).

Residues 2-22 (GFGGISLWQLLIVLAIIVLLF) form a helical membrane-spanning segment. A disordered region spans residues 43 to 82 (KAMSDEKNTDKEKPEQIQKSEESAPLDSAHTEKNKDNNKV). Basic and acidic residues-rich tracts occupy residues 44–64 (AMSD…KSEE) and 71–82 (AHTEKNKDNNKV).

It belongs to the TatA/E family. In terms of assembly, the Tat system comprises two distinct complexes: a TatABC complex, containing multiple copies of TatA, TatB and TatC subunits, and a separate TatA complex, containing only TatA subunits. Substrates initially bind to the TatABC complex, which probably triggers association of the separate TatA complex to form the active translocon.

Its subcellular location is the cell inner membrane. In terms of biological role, part of the twin-arginine translocation (Tat) system that transports large folded proteins containing a characteristic twin-arginine motif in their signal peptide across membranes. TatA could form the protein-conducting channel of the Tat system. This chain is Sec-independent protein translocase protein TatA, found in Pseudoalteromonas translucida (strain TAC 125).